The chain runs to 470 residues: Light-independent protochlorophyllide reductase subunit N (470 aa).

The [4Fe-4S] cluster site is built by Cys-24, Cys-49, and Cys-109.

This sequence belongs to the BchN/ChlN family. Protochlorophyllide reductase is composed of three subunits; ChlL, ChlN and ChlB. Forms a heterotetramer of two ChlB and two ChlN subunits. Requires [4Fe-4S] cluster as cofactor.

The catalysed reaction is chlorophyllide a + oxidized 2[4Fe-4S]-[ferredoxin] + 2 ADP + 2 phosphate = protochlorophyllide a + reduced 2[4Fe-4S]-[ferredoxin] + 2 ATP + 2 H2O. It participates in porphyrin-containing compound metabolism; chlorophyll biosynthesis (light-independent). In terms of biological role, component of the dark-operative protochlorophyllide reductase (DPOR) that uses Mg-ATP and reduced ferredoxin to reduce ring D of protochlorophyllide (Pchlide) to form chlorophyllide a (Chlide). This reaction is light-independent. The NB-protein (ChlN-ChlB) is the catalytic component of the complex. The polypeptide is Light-independent protochlorophyllide reductase subunit N (Acaryochloris marina (strain MBIC 11017)).